The following is a 331-amino-acid chain: L-lactate dehydrogenase A chain (331 aa).

NAD(+)-binding positions include 29 to 57 (GMVG…MEDK) and Arg-98. Substrate is bound by residues Arg-105, Asn-137, and Arg-168. Asn-137 lines the NAD(+) pocket. His-192 functions as the Proton acceptor in the catalytic mechanism. Thr-247 provides a ligand contact to substrate.

Belongs to the LDH/MDH superfamily. LDH family. As to quaternary structure, homotetramer.

The protein localises to the cytoplasm. It catalyses the reaction (S)-lactate + NAD(+) = pyruvate + NADH + H(+). It functions in the pathway fermentation; pyruvate fermentation to lactate; (S)-lactate from pyruvate: step 1/1. Functionally, interconverts simultaneously and stereospecifically pyruvate and lactate with concomitant interconversion of NADH and NAD(+). In Parachaenichthys charcoti (Charcot's dragonfish), this protein is L-lactate dehydrogenase A chain (ldha).